A 156-amino-acid chain; its full sequence is Large ribosomal subunit protein eL24 (156 aa).

Residues 110 to 123 (RAAKEKQKQKELEK) are compositionally biased toward basic and acidic residues. The interval 110 to 156 (RAAKEKQKQKELEKKAKKVEKKKPTLAPKQKAAKITQKPAPRVGGKR) is disordered.

Belongs to the eukaryotic ribosomal protein eL24 family.

This is Large ribosomal subunit protein eL24 (RPL24) from Schistosoma japonicum (Blood fluke).